A 75-amino-acid polypeptide reads, in one-letter code: Tautomerase PptA (75 aa).

Pro-2 functions as the Proton acceptor; via imino nitrogen in the catalytic mechanism.

Belongs to the 4-oxalocrotonate tautomerase family. PptA subfamily. Homodimer.

It localises to the cytoplasm. This is Tautomerase PptA from Escherichia coli O139:H28 (strain E24377A / ETEC).